The primary structure comprises 505 residues: Cell division control protein 6 homolog B (505 aa).

Residues 37–72 (KRKMRSDSAAVSGNSVSTPKKLKSHLPSSVPNPGMS) are disordered. The span at 45–54 (AAVSGNSVST) shows a compositional bias: polar residues.

It belongs to the CDC6/cdc18 family.

It localises to the nucleus. Its function is as follows. May be involved in the initiation of DNA replication. This Arabidopsis thaliana (Mouse-ear cress) protein is Cell division control protein 6 homolog B.